Reading from the N-terminus, the 367-residue chain is WAT1-related protein At3g28050 (367 aa).

10 helical membrane passes run 10-30, 40-60, 73-93, 103-123, 142-162, 179-199, 211-231, 246-266, 276-296, and 301-321; these read VLPV…NTLF, FHVF…PSLF, FSIL…NIMG, TLAS…AVVF, TVVS…VVIA, WILG…WYIV, FTVV…VTLF, IALV…NTIH, LFVA…GVIF, and LYIG…TVMW. 2 consecutive EamA domains span residues 25–153 and 195–319; these read GLNT…FIVT and LWYI…FYTV. Residues 338-367 are disordered; that stretch reads HEEANEADLDSPSGSQKAPLLESYKNDEHV.

Belongs to the drug/metabolite transporter (DMT) superfamily. Plant drug/metabolite exporter (P-DME) (TC 2.A.7.4) family.

The protein localises to the membrane. This chain is WAT1-related protein At3g28050, found in Arabidopsis thaliana (Mouse-ear cress).